Consider the following 475-residue polypeptide: Aspartyl/glutamyl-tRNA(Asn/Gln) amidotransferase subunit B (475 aa).

It belongs to the GatB/GatE family. GatB subfamily. As to quaternary structure, heterotrimer of A, B and C subunits.

It catalyses the reaction L-glutamyl-tRNA(Gln) + L-glutamine + ATP + H2O = L-glutaminyl-tRNA(Gln) + L-glutamate + ADP + phosphate + H(+). It carries out the reaction L-aspartyl-tRNA(Asn) + L-glutamine + ATP + H2O = L-asparaginyl-tRNA(Asn) + L-glutamate + ADP + phosphate + 2 H(+). In terms of biological role, allows the formation of correctly charged Asn-tRNA(Asn) or Gln-tRNA(Gln) through the transamidation of misacylated Asp-tRNA(Asn) or Glu-tRNA(Gln) in organisms which lack either or both of asparaginyl-tRNA or glutaminyl-tRNA synthetases. The reaction takes place in the presence of glutamine and ATP through an activated phospho-Asp-tRNA(Asn) or phospho-Glu-tRNA(Gln). The chain is Aspartyl/glutamyl-tRNA(Asn/Gln) amidotransferase subunit B from Staphylococcus saprophyticus subsp. saprophyticus (strain ATCC 15305 / DSM 20229 / NCIMB 8711 / NCTC 7292 / S-41).